We begin with the raw amino-acid sequence, 400 residues long: Nicotinate phosphoribosyltransferase (400 aa).

Histidine 220 is subject to Phosphohistidine; by autocatalysis.

The protein belongs to the NAPRTase family. Transiently phosphorylated on a His residue during the reaction cycle. Phosphorylation strongly increases the affinity for substrates and increases the rate of nicotinate D-ribonucleotide production. Dephosphorylation regenerates the low-affinity form of the enzyme, leading to product release.

It carries out the reaction nicotinate + 5-phospho-alpha-D-ribose 1-diphosphate + ATP + H2O = nicotinate beta-D-ribonucleotide + ADP + phosphate + diphosphate. It functions in the pathway cofactor biosynthesis; NAD(+) biosynthesis; nicotinate D-ribonucleotide from nicotinate: step 1/1. Functionally, catalyzes the synthesis of beta-nicotinate D-ribonucleotide from nicotinate and 5-phospho-D-ribose 1-phosphate at the expense of ATP. The sequence is that of Nicotinate phosphoribosyltransferase from Salmonella newport (strain SL254).